Reading from the N-terminus, the 195-residue chain is Protein A43 (195 aa).

The signal sequence occupies residues 1-21; sequence MMIKWIISILTMSIMPVLVYS. Over 23–166 the chain is Extracellular; sequence SIFRFRSEDV…YKDINDKYND (144 aa). N-linked (GlcNAc...) asparagine; by host glycans are attached at residues Asn66 and Asn115. Residues 167–187 form a helical membrane-spanning segment; it reads IYDFTAICMLIASTLIVTIYV. Over 188 to 195 the chain is Cytoplasmic; that stretch reads FKKIKMNS.

This sequence belongs to the orthopoxvirus OPG172 protein family.

The protein resides in the host membrane. Its subcellular location is the host cell surface. The polypeptide is Protein A43 (OPG172) (Homo sapiens (Human)).